The chain runs to 46 residues: MNNTIKDFDLDLKTNKKDTATPYVGSRYLCTPGSCWKLVCFTTTVK.

The propeptide occupies 1–24; that stretch reads MNNTIKDFDLDLKTNKKDTATPYV.

The protein belongs to the type A lantibiotic family. In terms of processing, maturation of lantibiotics involves the enzymatic conversion of Thr, and Ser into dehydrated AA and the formation of thioether bonds with cysteine. This is followed by membrane translocation and cleavage of the modified precursor.

Functionally, lanthionine-containing peptide antibiotic (lantibiotic) active on certain Gram-positive bacteria. The bactericidal activity of lantibiotics is based on depolarization of energized bacterial cytoplasmic membranes, initiated by the formation of aqueous transmembrane pores. This Streptococcus pyogenes serotype M1 protein is Lantibiotic streptin (srtA).